The sequence spans 540 residues: MTAKQIIFDEAARRKLQAGVDALANTVKVTLGPRGRNVVLDKKFGAPAVANDGVTIAREIELEDPFENMGAQLVKEVATKTNDVAGDGTTTSTVLAQAIVKEGLKNVTGGANPMILKRGIEKAVQVAVEELRKQAIPVETNKAIAEVAAISANNDREIGELVAKAMDTVGKDGVITVEESKTLHTELETVEGMQFDRGYVSAYMVTDTEKMEAVLNEPYILITDKKISAVQDLLPILEKVVQRGKPLLIIAEDVEGEALATLVVNKLRGTLQVAAVKAPGFGDRRKAMLEDIAILTGGEVVSEELGRKLENATIEMLGQARQVRIEKEKTTIIDGAGSSEAIKNRVAAIKRQIEETTSDFDREKLQERLAKLAGGVAVIKVGAATEVELKEKKLRIEDALNATRAAVEEGIVAGGGVALLQTQKAIDELIKTLEGDEKVGAQIVRRAVEEPLRCIVENGGLEGSVVVEKVRTLPVGHGFDAMKEEYVDMVAAGIIDPVKVTRSALQNAASIAALILTTEALVTEKPEKKENNPAPNMDMM.

Residues 30–33 (TLGP), 87–91 (DGTTT), glycine 415, and aspartate 496 each bind ATP.

The protein belongs to the chaperonin (HSP60) family. Forms a cylinder of 14 subunits composed of two heptameric rings stacked back-to-back. Interacts with the co-chaperonin GroES.

Its subcellular location is the cytoplasm. It catalyses the reaction ATP + H2O + a folded polypeptide = ADP + phosphate + an unfolded polypeptide.. In terms of biological role, together with its co-chaperonin GroES, plays an essential role in assisting protein folding. The GroEL-GroES system forms a nano-cage that allows encapsulation of the non-native substrate proteins and provides a physical environment optimized to promote and accelerate protein folding. The protein is Chaperonin GroEL of Symbiobacterium thermophilum (strain DSM 24528 / JCM 14929 / IAM 14863 / T).